Reading from the N-terminus, the 357-residue chain is Glucose-6-phosphatase catalytic subunit 1 (357 aa).

Over 1 to 28 the chain is Lumenal; it reads MEKGMNVLHDFGIQSTHYLQVNYQNSQD. A helical membrane pass occupies residues 29–49; that stretch reads WFILVSVIADLRNAFYVLFPI. Residues 50 to 60 lie on the Cytoplasmic side of the membrane; sequence WFHLREAVGIK. Residues 61 to 81 form a helical membrane-spanning segment; that stretch reads LLWVAVIGDWLNLVFKWILFG. The Lumenal segment spans residues 82–117; sequence QRPYWWVLDTDYYSNTSAPLIKQFPVTCETGPGSPS. Residue Arg83 coordinates substrate. N-linked (GlcNAc...) asparagine glycosylation is present at Asn96. The helical transmembrane segment at 118–138 threads the bilayer; sequence GHAMGTAGVYYVMVTSTLSIF. His119 serves as the catalytic Proton donor. Residues 139–147 are Cytoplasmic-facing; that stretch reads RGKKKPTYR. The helical transmembrane segment at 148 to 168 threads the bilayer; it reads FRCLNVMLWLGFWVVQLNVCL. Topologically, residues 169-170 are lumenal; the sequence is SR. Arg170 lines the substrate pocket. The chain crosses the membrane as a helical span at residues 171 to 191; sequence IYLAAHFPHQVVAGVLSGIAV. His176 serves as the catalytic Nucleophile. Over 192–209 the chain is Cytoplasmic; sequence AETFRHIQSIYNASLKKY. A helical transmembrane segment spans residues 210-230; it reads FLITCFLFSFAIGFYLLLKWL. The Lumenal segment spans residues 231–254; that stretch reads GVDLLWTLEKAKRRCERPEWVHID. A helical transmembrane segment spans residues 255–275; the sequence is TTPFASLLKNLGTLFGLGLAL. The Cytoplasmic portion of the chain corresponds to 276–291; sequence NSSMYRESCKGKLSKW. Residues 292-312 traverse the membrane as a helical segment; it reads FPFRLSCIVASLVLLHLFDSL. At 313–320 the chain is on the lumenal side; that stretch reads KPPSQIEL. A helical membrane pass occupies residues 321–341; that stretch reads IFYVLSFCKSAAVPLASVSLI. The Cytoplasmic portion of the chain corresponds to 342–357; it reads PYCLAWVLGQPNKKTV. Residues 354 to 357 carry the Prevents secretion from ER motif; it reads KKTV.

The protein belongs to the glucose-6-phosphatase family.

The protein resides in the endoplasmic reticulum membrane. The catalysed reaction is D-glucose 6-phosphate + H2O = D-glucose + phosphate. Its pathway is carbohydrate biosynthesis; gluconeogenesis. Hydrolyzes glucose-6-phosphate to glucose in the endoplasmic reticulum. Forms with the glucose-6-phosphate transporter (SLC37A4/G6PT) the complex responsible for glucose production in the terminal step of glycogenolysis and gluconeogenesis. Hence, it is the key enzyme in homeostatic regulation of blood glucose levels. The sequence is that of Glucose-6-phosphatase catalytic subunit 1 (G6PC1) from Bos taurus (Bovine).